A 283-amino-acid chain; its full sequence is tRNA pseudouridine synthase A (283 aa).

Catalysis depends on D52, which acts as the Nucleophile. Y148 contacts substrate.

The protein belongs to the tRNA pseudouridine synthase TruA family. In terms of assembly, homodimer.

The catalysed reaction is uridine(38/39/40) in tRNA = pseudouridine(38/39/40) in tRNA. Functionally, formation of pseudouridine at positions 38, 39 and 40 in the anticodon stem and loop of transfer RNAs. This chain is tRNA pseudouridine synthase A, found in Orientia tsutsugamushi (strain Ikeda) (Rickettsia tsutsugamushi).